We begin with the raw amino-acid sequence, 651 residues long: MADSAELKQMVMSLRVSELQVLLGYAGRNKHGRKHELLTKALHLLKAGCSPAVQMKIKELYRRRFPQKIMTPADLSIPNVHSSPMPATLSPSTIPQLTYDGHPASSPLLPVSLLGPKHELELPHLTSALHPVHPDIKLQKLPFYDLLDELIKPTSLASDNSQRFRETCFAFALTPQQVQQISSSMDISGTKCDFTVQVQLRFCLSETSCPQEDHFPPNLCVKVNTKPCSLPGYLPPTKNGVEPKRPSRPINITSLVRLSTTVPNTIVVSWTAEIGRNYSMAVYLVKQLSSTVLLQRLRAKGIRNPDHSRALIKEKLTADPDSEIATTSLRVSLLCPLGKMRLTIPCRALTCSHLQCFDATLYIQMNEKKPTWVCPVCDKKAPYEHLIIDGLFMEILKYCTDCDEIQFKEDGTWAPMRSKKEVQEVSASYNGVDGCLSSTLEHQVASHHQSSNKNKKVEVIDLTIDSSSDEEEEEPSAKRTCPSLSPTSPLNNKGILSLPHQASPVSRTPSLPAVDTSYINTSLIQDYRHPFHMTPMPYDLQGLDFFPFLSGDNQHYNTSLLAAAAAAVSDDQDLLHSSRFFPYTSSQMFLDQLSAGGSTSLPTTNGSSSGSNSSLVSSNSLRESHSHTVTNRSSTDTASIFGIIPDIISLD.

At Ala2 the chain carries N-acetylalanine. Positions 2–200 (ADSAELKQMV…KCDFTVQVQL (199 aa)) are required for interaction with MSX1. The region spanning 11–45 (VMSLRVSELQVLLGYAGRNKHGRKHELLTKALHLL) is the SAP domain. An LXXLL motif motif is present at residues 19–23 (LQVLL). Residues Lys40 and Lys46 each participate in a glycyl lysine isopeptide (Lys-Gly) (interchain with G-Cter in SUMO2) cross-link. The Nuclear localization signal signature appears at 56–64 (KIKELYRRR). A PINIT domain is found at 124–288 (HLTSALHPVH…SMAVYLVKQL (165 aa)). Residues Lys137 and Lys238 each participate in a glycyl lysine isopeptide (Lys-Gly) (interchain with G-Cter in SUMO2) cross-link. The SP-RING-type zinc-finger motif lies at 320-405 (PDSEIATTSL…LKYCTDCDEI (86 aa)). The Zn(2+) site is built by Cys351, His353, Cys374, and Cys377. Positions 368-380 (KKPTWVCPVCDKK) match the Nuclear localization signal motif. Lys453 participates in a covalent cross-link: Glycyl lysine isopeptide (Lys-Gly) (interchain with G-Cter in SUMO2). Residues 462–473 (LTIDSSSDEEEE) are SUMO1-binding. The segment at 465-511 (DSSSDEEEEEPSAKRTCPSLSPTSPLNNKGILSLPHQASPVSRTPSL) is disordered. A phosphoserine mark is found at Ser467, Ser468, Ser483, and Ser485. The segment covering 482–491 (PSLSPTSPLN) has biased composition (polar residues). Position 487 is a phosphothreonine (Thr487). The residue at position 488 (Ser488) is a Phosphoserine. Residue Lys493 forms a Glycyl lysine isopeptide (Lys-Gly) (interchain with G-Cter in SUMO2) linkage. 3 positions are modified to phosphoserine: Ser503, Ser510, and Ser522. 2 consecutive repeat copies span residues 520–523 (NTSL) and 557–560 (NTSL). A 4 X 4 AA repeats of N-T-S-L region spans residues 520 to 615 (NTSLIQDYRH…GSSSGSNSSL (96 aa)). The 3; approximate repeat unit spans residues 598–601 (STSL). Positions 599–621 (TSLPTTNGSSSGSNSSLVSSNSL) are enriched in low complexity. Residues 599 to 632 (TSLPTTNGSSSGSNSSLVSSNSLRESHSHTVTNR) form a disordered region. The 4; approximate repeat unit spans residues 612–615 (NSSL).

It belongs to the PIAS family. In terms of assembly, interacts with NCOA2 and AR. Interacts with NR2C1; the interaction promotes its sumoylation. Interacts with DDX21, CSRP2, AXIN1, JUN, UBE2I, SUMO1, SATB2, PLAG1, TP53 and STAT1 (dimer), following IFNA1-stimulation. Interacts with SP3 (preferentially when SUMO-modified). Interacts with KLF8; the interaction results in SUMO ligation and repression of KLF8 transcriptional activity and of its cell cycle progression into G(1) phase. Interacts with CHUK/IKKA; this interaction induces PIAS1 phosphorylation. Interacts with PTK2/FAK1; the interaction promotes its sumoylation. Interacts with DDX5. Interacts with PML. Interacts with MTA1. Interacts with SUMO1P1/SUMO5. Interacts with PRDM1/Blimp-1. Interacts (via N-terminus) with MSX1 (via C-terminus); the interaction is required for the localization of both proteins to the nuclear periphery and specific binding of MSX1 to the core enhancer region in target gene promoters. (Microbial infection) Interacts with ebolavirus VP35; this interaction mediates the sumoylation of IRF7 and contributes to the viral inhibition of IFN-type I production. Post-translationally, sumoylated. Expressed in numerous tissues with highest level in testis.

It is found in the nucleus. The protein localises to the nucleus speckle. It localises to the PML body. Its subcellular location is the cytoplasm. The protein resides in the cytoskeleton. Its pathway is protein modification; protein sumoylation. Functions as an E3-type small ubiquitin-like modifier (SUMO) ligase, stabilizing the interaction between UBE2I and the substrate, and as a SUMO-tethering factor. Catalyzes sumoylation of various proteins, such as CEBPB, MRE11, MTA1, PTK2 and PML. Plays a crucial role as a transcriptional coregulation in various cellular pathways, including the STAT pathway, the p53 pathway and the steroid hormone signaling pathway. In vitro, binds A/T-rich DNA. The effects of this transcriptional coregulation, transactivation or silencing, may vary depending upon the biological context. Mediates sumoylation of MRE11, stabilizing MRE11 on chromatin during end resection. Sumoylates PML (at 'Lys-65' and 'Lys-160') and PML-RAR and promotes their ubiquitin-mediated degradation. PIAS1-mediated sumoylation of PML promotes its interaction with CSNK2A1/CK2 which in turn promotes PML phosphorylation and degradation. Enhances the sumoylation of MTA1 and may participate in its paralog-selective sumoylation. Plays a dynamic role in adipogenesis by promoting the SUMOylation and degradation of CEBPB. Mediates the nuclear mobility and localization of MSX1 to the nuclear periphery, whereby MSX1 is brought into the proximity of target myoblast differentiation factor genes. Also required for the binding of MSX1 to the core enhancer region in target gene promoter regions, independent of its sumoylation activity. Capable of binding to the core enhancer region TAAT box in the MYOD1 gene promoter. Functionally, (Microbial infection) Restricts Epstein-Barr virus (EBV) lytic replication by acting as an inhibitor for transcription factors involved in lytic gene expression. The virus can use apoptotic caspases to antagonize PIAS1-mediated restriction and express its lytic genes. This chain is E3 SUMO-protein ligase PIAS1 (PIAS1), found in Homo sapiens (Human).